A 412-amino-acid chain; its full sequence is N-carbamoyl-L-amino-acid amidohydrolase (412 aa).

H82, D93, E128, and H193 together coordinate a divalent metal cation. Residues Q196, H229, N278, R291, and G360 each contribute to the an N-carbamoyl-L-alpha-amino acid site. Residues 212–330 (SIVGVRALRV…DVDEFFNLSP (119 aa)) are involved in dimerization. H385 is a binding site for a divalent metal cation.

This sequence belongs to the peptidase M20 family. As to quaternary structure, homodimer. Requires Mn(2+) as cofactor. Ni(2+) serves as cofactor. Co(2+) is required as a cofactor. The cofactor is Fe(2+).

It carries out the reaction an N-carbamoyl-L-alpha-amino acid + H2O + 2 H(+) = an L-alpha-amino acid + NH4(+) + CO2. It catalyses the reaction N-carbamoyl-L-tryptophan + H2O + 2 H(+) = L-tryptophan + NH4(+) + CO2. The enzyme catalyses N-carbamoyl-L-tyrosine + H2O + 2 H(+) = L-tyrosine + NH4(+) + CO2. The catalysed reaction is N-carbamoyl-L-phenylalanine + H2O + 2 H(+) = L-phenylalanine + NH4(+) + CO2. Its function is as follows. Catalyzes the hydrolysis of aliphatic N-carbamoyl-L-alpha-amino acids to free L-alpha-amino acids. Is strictly L-specific since it is inactive toward N-carbamoyl-D-alpha-amino acids. Shows a preference for aromatic N-carbamoyl-L-alpha-amino acids, such as N-carbamoyl-L-tryptophan and N-carbamoyl-L-tyrosine and, to a lesser extent, N-carbamoyl-L-phenylalanine and the non-natural amino acid N-carbamoyl-L-thienylalanine. Carbamoyl derivatives of beta-alanine and charged aliphatic amino acids are not accepted as substrates. In Paenarthrobacter aurescens (Arthrobacter aurescens), this protein is N-carbamoyl-L-amino-acid amidohydrolase.